A 227-amino-acid polypeptide reads, in one-letter code: Prolactin (227 aa).

The signal sequence occupies residues 1 to 28; sequence MNIKGSPWKGSLLLLLVSNLLLCQNVAP. Cys-32 and Cys-39 form a disulfide bridge. Ser-54 is subject to Phosphoserine. Residue Asn-59 is glycosylated (N-linked (GlcNAc...) asparagine). Ser-62 and Ser-118 each carry phosphoserine. Cystine bridges form between Cys-86–Cys-202 and Cys-219–Cys-227.

This sequence belongs to the somatotropin/prolactin family. As to quaternary structure, interacts with PRLR.

It localises to the secreted. In terms of biological role, prolactin acts primarily on the mammary gland by promoting lactation. This Macaca mulatta (Rhesus macaque) protein is Prolactin (PRL).